The following is a 277-amino-acid chain: tRNA pseudouridine synthase A (277 aa).

Asp-51 serves as the catalytic Nucleophile. Tyr-109 is a binding site for substrate.

It belongs to the tRNA pseudouridine synthase TruA family. As to quaternary structure, homodimer.

It catalyses the reaction uridine(38/39/40) in tRNA = pseudouridine(38/39/40) in tRNA. Formation of pseudouridine at positions 38, 39 and 40 in the anticodon stem and loop of transfer RNAs. The polypeptide is tRNA pseudouridine synthase A (Nitrosomonas eutropha (strain DSM 101675 / C91 / Nm57)).